The chain runs to 33 residues: Rugosin-A (33 aa).

A disulfide bridge links cysteine 27 with cysteine 33.

This sequence belongs to the frog skin active peptide (FSAP) family. Brevinin subfamily. As to expression, expressed by the skin glands.

Its subcellular location is the secreted. Functionally, has antibacterial activity against Gram-positive bacteria. The sequence is that of Rugosin-A from Glandirana rugosa (Japanese wrinkled frog).